The chain runs to 110 residues: UPF0060 membrane protein Pfl01_4105 (110 aa).

Transmembrane regions (helical) follow at residues 5-25 (LWFF…WMWL), 28-48 (GKSA…ALLL), 59-79 (AYAA…AVVE), and 84-104 (LGSD…ILFG).

Belongs to the UPF0060 family.

Its subcellular location is the cell inner membrane. The sequence is that of UPF0060 membrane protein Pfl01_4105 from Pseudomonas fluorescens (strain Pf0-1).